We begin with the raw amino-acid sequence, 577 residues long: Aspartate--tRNA ligase (577 aa).

An L-aspartate-binding site is contributed by glutamate 171. Residues 195 to 198 (QLFK) form an aspartate region. Arginine 217 provides a ligand contact to L-aspartate. ATP-binding positions include 217 to 219 (RDE) and glutamine 226. Residue histidine 437 participates in L-aspartate binding. Glutamate 472 is an ATP binding site. Arginine 479 contacts L-aspartate. 524–527 (GFDR) contacts ATP.

It belongs to the class-II aminoacyl-tRNA synthetase family. Type 1 subfamily. In terms of assembly, homodimer.

The protein localises to the cytoplasm. The catalysed reaction is tRNA(Asp) + L-aspartate + ATP = L-aspartyl-tRNA(Asp) + AMP + diphosphate. Catalyzes the attachment of L-aspartate to tRNA(Asp) in a two-step reaction: L-aspartate is first activated by ATP to form Asp-AMP and then transferred to the acceptor end of tRNA(Asp). In Deinococcus geothermalis (strain DSM 11300 / CIP 105573 / AG-3a), this protein is Aspartate--tRNA ligase.